The primary structure comprises 456 residues: MGNSRSRVGRSFCSQFLPEEQAEIDQLFDALSSDKNSPNVSSKSFSLKALQNHVGEALPPEMVTRLYDGMRRVDLTGKAKGPSENVSQEQFTASMSHLLKGNSEEKSLMIMKMISATEGPVKAREVQKFTEDLVGSVVHVLSHRQELRGWTGKEAPGPNPRVQVLAAQLLSDMKLQDGKRLLGPQWLDYDCDRAVIEDWVFRVPHVAIFLSVVICKGFLILCSSLDLTTLVPERQVDQGRGFESILDVLSVMYINAQLPREQRHRWCLLFSSELHGHSFSQLCGHITHRGPCVAVLEDHDKHVFGGFASCSWEVKPQFQGDNRCFLFSICPSMAVYTHTGYNDHYMYLNHGQQTIPNGLGMGGQHNYFGLWVDVDFGKGHSRAKPTCTTYNSPQLSAQENFQFDKMEVWAVGDPSEEQLAKGNKSILDADPEAQALLEISGHSRHSEGLREVPDDE.

Glycine 2 carries N-myristoyl glycine lipidation. The TLDc domain occupies 244–412; sequence SILDVLSVMY…FDKMEVWAVG (169 aa).

As to quaternary structure, interacts (via C-terminal domain) with MTOR and MLST8; the interaction with MTOR increases upon nutrient stimulation.

The protein localises to the membrane. It localises to the cytoplasm. Its subcellular location is the lysosome. Its function is as follows. Activates an alternative mTOR signaling through RPS6KB2 activation and EIF4EBP1 repression to regulate cell proliferation and migration. Recruits MTOR at the lysosome, essential for MTOR signaling at the lysosome. The polypeptide is MTOR-associated protein MEAK7 (Homo sapiens (Human)).